A 268-amino-acid polypeptide reads, in one-letter code: Type III pantothenate kinase (268 aa).

ATP is bound at residue 6–13; sequence DVGNTNIV. Residues tyrosine 100 and 107-110 contribute to the substrate site; that span reads GADR. Aspartate 109 (proton acceptor) is an active-site residue. Aspartate 129 is a binding site for K(+). Threonine 132 is an ATP binding site. Threonine 184 contacts substrate.

The protein belongs to the type III pantothenate kinase family. Homodimer. NH4(+) is required as a cofactor. It depends on K(+) as a cofactor.

Its subcellular location is the cytoplasm. It catalyses the reaction (R)-pantothenate + ATP = (R)-4'-phosphopantothenate + ADP + H(+). Its pathway is cofactor biosynthesis; coenzyme A biosynthesis; CoA from (R)-pantothenate: step 1/5. In terms of biological role, catalyzes the phosphorylation of pantothenate (Pan), the first step in CoA biosynthesis. The protein is Type III pantothenate kinase of Alkaliphilus metalliredigens (strain QYMF).